We begin with the raw amino-acid sequence, 300 residues long: Phospholipase A1 (300 aa).

An intrachain disulfide couples Cys-4 to Cys-87. The active-site Nucleophile is Ser-137. Catalysis depends on Asp-165, which acts as the Charge relay system. Disulfide bonds link Cys-176–Cys-181 and Cys-219–Cys-227. His-229 (charge relay system) is an active-site residue. 3 disulfides stabilise this stretch: Cys-244-Cys-268, Cys-245-Cys-293, and Cys-261-Cys-266.

This sequence belongs to the AB hydrolase superfamily. Lipase family. In terms of tissue distribution, expressed by the venom gland.

Its subcellular location is the secreted. The catalysed reaction is a 1,2-diacyl-sn-glycero-3-phosphocholine + H2O = a 2-acyl-sn-glycero-3-phosphocholine + a fatty acid + H(+). Its function is as follows. Catalyzes the hydrolysis of phosphatidylcholine with phospholipase A1 activity. May act as an allergen and induce hemolytic activity. The polypeptide is Phospholipase A1 (Vespula maculifrons (Eastern yellow jacket)).